A 250-amino-acid polypeptide reads, in one-letter code: 1-(5-phosphoribosyl)-5-[(5-phosphoribosylamino)methylideneamino] imidazole-4-carboxamide isomerase (250 aa).

The Proton acceptor role is filled by aspartate 12. Catalysis depends on aspartate 133, which acts as the Proton donor.

This sequence belongs to the HisA/HisF family.

The protein localises to the cytoplasm. It carries out the reaction 1-(5-phospho-beta-D-ribosyl)-5-[(5-phospho-beta-D-ribosylamino)methylideneamino]imidazole-4-carboxamide = 5-[(5-phospho-1-deoxy-D-ribulos-1-ylimino)methylamino]-1-(5-phospho-beta-D-ribosyl)imidazole-4-carboxamide. Its pathway is amino-acid biosynthesis; L-histidine biosynthesis; L-histidine from 5-phospho-alpha-D-ribose 1-diphosphate: step 4/9. In Zymomonas mobilis subsp. mobilis (strain ATCC 31821 / ZM4 / CP4), this protein is 1-(5-phosphoribosyl)-5-[(5-phosphoribosylamino)methylideneamino] imidazole-4-carboxamide isomerase.